The sequence spans 419 residues: UDP-N-acetylglucosamine 1-carboxyvinyltransferase (419 aa).

Phosphoenolpyruvate is bound at residue 22 to 23 (KN). Residue Arg-92 coordinates UDP-N-acetyl-alpha-D-glucosamine. The active-site Proton donor is the Cys-116. Cys-116 carries the post-translational modification 2-(S-cysteinyl)pyruvic acid O-phosphothioketal. UDP-N-acetyl-alpha-D-glucosamine contacts are provided by residues 121-125 (RPIDL), Asp-307, and Leu-329.

The protein belongs to the EPSP synthase family. MurA subfamily.

It is found in the cytoplasm. The catalysed reaction is phosphoenolpyruvate + UDP-N-acetyl-alpha-D-glucosamine = UDP-N-acetyl-3-O-(1-carboxyvinyl)-alpha-D-glucosamine + phosphate. It participates in cell wall biogenesis; peptidoglycan biosynthesis. Its function is as follows. Cell wall formation. Adds enolpyruvyl to UDP-N-acetylglucosamine. This is UDP-N-acetylglucosamine 1-carboxyvinyltransferase from Campylobacter fetus subsp. fetus (strain 82-40).